The sequence spans 154 residues: 6,7-dimethyl-8-ribityllumazine synthase (154 aa).

5-amino-6-(D-ribitylamino)uracil contacts are provided by residues phenylalanine 21, 55-57, and 79-81; these read AFE and CVI. 84–85 contributes to the (2S)-2-hydroxy-3-oxobutyl phosphate binding site; the sequence is AT. Catalysis depends on histidine 87, which acts as the Proton donor. Residue phenylalanine 112 coordinates 5-amino-6-(D-ribitylamino)uracil. Arginine 126 is a binding site for (2S)-2-hydroxy-3-oxobutyl phosphate.

The protein belongs to the DMRL synthase family. As to quaternary structure, forms an icosahedral capsid composed of 60 subunits, arranged as a dodecamer of pentamers.

The catalysed reaction is (2S)-2-hydroxy-3-oxobutyl phosphate + 5-amino-6-(D-ribitylamino)uracil = 6,7-dimethyl-8-(1-D-ribityl)lumazine + phosphate + 2 H2O + H(+). The protein operates within cofactor biosynthesis; riboflavin biosynthesis; riboflavin from 2-hydroxy-3-oxobutyl phosphate and 5-amino-6-(D-ribitylamino)uracil: step 1/2. In terms of biological role, catalyzes the formation of 6,7-dimethyl-8-ribityllumazine by condensation of 5-amino-6-(D-ribitylamino)uracil with 3,4-dihydroxy-2-butanone 4-phosphate. This is the penultimate step in the biosynthesis of riboflavin. The sequence is that of 6,7-dimethyl-8-ribityllumazine synthase from Staphylococcus aureus (strain MRSA252).